Reading from the N-terminus, the 65-residue chain is Large ribosomal subunit protein bL35 (65 aa).

Residues 1–26 (MPKIKTLRSAAKRFKKTESGKFKRKQ) are disordered.

Belongs to the bacterial ribosomal protein bL35 family.

In Buchnera aphidicola subsp. Baizongia pistaciae (strain Bp), this protein is Large ribosomal subunit protein bL35.